The sequence spans 915 residues: Pentatricopeptide repeat-containing protein At5g65560 (915 aa).

20 PPR repeats span residues 182–216 (IIGC…KVCP), 217–251 (NIYT…GLDP), 252–286 (DFFT…GCRR), 287–321 (NEVA…ECFP), 322–356 (TVRT…GIKP), 357–391 (NIHT…GLMP), 392–426 (NVIT…KLSP), 427–460 (NTRT…KVLP), 461–495 (DVVT…GLVP), 496–530 (DQWT…GVNP), 531–565 (NVVM…NCLP), 566–600 (NSLT…GLQP), 601–635 (TVST…GTKP), 636–670 (DAHT…GVSP), 671–705 (DLFT…GCEP), 724–758 (KQKG…SVTP), 759–794 (NAKS…GISP), 795–829 (SELV…GHLP), 830–864 (QLES…GYYE), and 865–899 (DELA…GCKF).

This sequence belongs to the PPR family. P subfamily.

The protein is Pentatricopeptide repeat-containing protein At5g65560 of Arabidopsis thaliana (Mouse-ear cress).